The chain runs to 922 residues: Histidine kinase 5 (922 aa).

Coiled-coil stretches lie at residues 86 to 120 (MQDN…EEYK) and 169 to 205 (KQKA…SQSA). A Histidine kinase domain is found at 373–614 (TMSHEIRSPL…TFTFILPYKV (242 aa)). The residue at position 376 (histidine 376) is a Phosphohistidine; by autocatalysis. Disordered stretches follow at residues 620 to 639 (YSDD…EPDD) and 728 to 773 (NGRC…TEVK). Positions 738–747 (SCSSSQASSE) are enriched in low complexity. The segment covering 761 to 773 (SHREEEKAETEVK) has biased composition (basic and acidic residues). The 143-residue stretch at 779 to 921 (KILLVEDNKI…KLRECLQQYL (143 aa)) folds into the Response regulatory domain. Residues aspartate 785, aspartate 828, and cysteine 830 each coordinate Mg(2+). 4-aspartylphosphate is present on aspartate 828.

Interacts with AHP1, APH2, APH3, APH5 and APH6, but not with APH4. Present in light-grown but not in etiolated seedlings. Mostly expressed in roots flowers and siliques, and, to a lower extent, in stems and leaves, especially in guard cells.

It localises to the cell membrane. Its subcellular location is the cytoplasm. It carries out the reaction ATP + protein L-histidine = ADP + protein N-phospho-L-histidine.. Functions as a histidine kinase and transmits the stress signal to a downstream MAPK cascade. This protein undergoes an ATP-dependent autophosphorylation at a conserved histidine residue in the kinase core, and a phosphoryl group is then transferred to a conserved aspartate residue in the receiver domain. Negative regulator of the ETR1-dependent abscisic acid (ABA) and ethylene signaling pathway that inhibits the root elongation. Promotes stomatal closure. Regulates stomatal opening by integrating multiple signals via hydrogen peroxide H(2)O(2) homeostasis in guard cells in an ABA-independent manner. May contribute to basal defense mechanisms by closing stomata in the presence of bacterial pathogens. Regulates both hormone levels and ROS production in response to stress. Required for full immunity to bacterial pathogen and necrotrophic fungus. The sequence is that of Histidine kinase 5 (AHK5) from Arabidopsis thaliana (Mouse-ear cress).